A 479-amino-acid polypeptide reads, in one-letter code: Proline--tRNA ligase (479 aa).

It belongs to the class-II aminoacyl-tRNA synthetase family. ProS type 3 subfamily. Homodimer.

Its subcellular location is the cytoplasm. The enzyme catalyses tRNA(Pro) + L-proline + ATP = L-prolyl-tRNA(Pro) + AMP + diphosphate. Catalyzes the attachment of proline to tRNA(Pro) in a two-step reaction: proline is first activated by ATP to form Pro-AMP and then transferred to the acceptor end of tRNA(Pro). This chain is Proline--tRNA ligase, found in Lachnospira eligens (strain ATCC 27750 / DSM 3376 / VPI C15-48 / C15-B4) (Eubacterium eligens).